Consider the following 157-residue polypeptide: SsrA-binding protein (157 aa).

The protein belongs to the SmpB family.

It is found in the cytoplasm. Required for rescue of stalled ribosomes mediated by trans-translation. Binds to transfer-messenger RNA (tmRNA), required for stable association of tmRNA with ribosomes. tmRNA and SmpB together mimic tRNA shape, replacing the anticodon stem-loop with SmpB. tmRNA is encoded by the ssrA gene; the 2 termini fold to resemble tRNA(Ala) and it encodes a 'tag peptide', a short internal open reading frame. During trans-translation Ala-aminoacylated tmRNA acts like a tRNA, entering the A-site of stalled ribosomes, displacing the stalled mRNA. The ribosome then switches to translate the ORF on the tmRNA; the nascent peptide is terminated with the 'tag peptide' encoded by the tmRNA and targeted for degradation. The ribosome is freed to recommence translation, which seems to be the essential function of trans-translation. The polypeptide is SsrA-binding protein (Elusimicrobium minutum (strain Pei191)).